The sequence spans 114 residues: Nucleoid-associated protein PCC7424_2224 (114 aa).

This sequence belongs to the YbaB/EbfC family. As to quaternary structure, homodimer.

It localises to the cytoplasm. It is found in the nucleoid. In terms of biological role, binds to DNA and alters its conformation. May be involved in regulation of gene expression, nucleoid organization and DNA protection. The protein is Nucleoid-associated protein PCC7424_2224 of Gloeothece citriformis (strain PCC 7424) (Cyanothece sp. (strain PCC 7424)).